Consider the following 468-residue polypeptide: V-type proton ATPase subunit H (468 aa).

It belongs to the V-ATPase H subunit family. As to quaternary structure, V-ATPase is a heteromultimeric enzyme made up of two complexes: the ATP-hydrolytic V1 complex and the proton translocation V0 complex. The V1 complex consists of three catalytic AB heterodimers that form a heterohexamer, three peripheral stalks each consisting of EG heterodimers, one central rotor including subunits D and F, and the regulatory subunits C and H. The proton translocation complex V0 consists of the proton transport subunit a, a ring of proteolipid subunits c9c'', rotary subunit d, subunits e and f, and the accessory subunits VhaAC45 and ATP6AP2.

Its function is as follows. Subunit of the V1 complex of vacuolar(H+)-ATPase (V-ATPase), a multisubunit enzyme composed of a peripheral complex (V1) that hydrolyzes ATP and a membrane integral complex (V0) that translocates protons. V-ATPase is responsible for acidifying and maintaining the pH of intracellular compartments and in some cell types, is targeted to the plasma membrane, where it is responsible for acidifying the extracellular environment. Subunit H is essential for V-ATPase activity, but not for the assembly of the complex. This is V-type proton ATPase subunit H (VhaSFD) from Drosophila melanogaster (Fruit fly).